We begin with the raw amino-acid sequence, 172 residues long: DNA-directed RNA polymerase II subunit RPB7 (172 aa).

The protein belongs to the eukaryotic RPB7/RPC8 RNA polymerase subunit family. As to quaternary structure, component of the RNA polymerase II (Pol II) complex consisting of 12 subunits. RPB4 and RPB7 form a subcomplex that protrudes from the 10-subunit Pol II core complex.

The protein resides in the nucleus. DNA-dependent RNA polymerase catalyzes the transcription of DNA into RNA using the four ribonucleoside triphosphates as substrates. Component of RNA polymerase II which synthesizes mRNA precursors and many functional non-coding RNAs. Pol II is the central component of the basal RNA polymerase II transcription machinery. It is composed of mobile elements that move relative to each other. RPB7 is part of a subcomplex with RPB4 that binds to a pocket formed by RPB1, RPB2 and RPB6 at the base of the clamp element. The RPB4-RPB7 subcomplex seems to lock the clamp via RPB7 in the closed conformation thus preventing double-stranded DNA to enter the active site cleft. The RPB4-RPB7 subcomplex binds single-stranded DNA and RNA. The protein is DNA-directed RNA polymerase II subunit RPB7 (polr2g) of Danio rerio (Zebrafish).